A 111-amino-acid polypeptide reads, in one-letter code: Cytochrome c 2.1 (111 aa).

At serine 2 the chain carries N-acetylserine. Residues cysteine 20, cysteine 23, histidine 24, and methionine 85 each contribute to the heme c site.

It belongs to the cytochrome c family. In terms of processing, binds 1 heme c group covalently per subunit.

Its subcellular location is the mitochondrion intermembrane space. In terms of biological role, electron carrier protein. The oxidized form of the cytochrome c heme group can accept an electron from the heme group of the cytochrome c1 subunit of cytochrome reductase. Cytochrome c then transfers this electron to the cytochrome oxidase complex, the final protein carrier in the mitochondrial electron-transport chain. The protein is Cytochrome c 2.1 (cyc-2.1) of Caenorhabditis elegans.